We begin with the raw amino-acid sequence, 385 residues long: Meiosis-specific protein MEI4 (385 aa).

The segment at 1–126 (MDVQKWYLRT…LSQHFVESCT (126 aa)) is interaction with REC114. Residues 86 to 110 (AQEPKSSESTLTSMEDSGCDLSNEQ) form a disordered region. Positions 92–107 (SESTLTSMEDSGCDLS) are enriched in polar residues.

Belongs to the MEI4L family. As to quaternary structure, part of the MCD recombinosome complex, at least composed of IHO1, REC114 and MEI4. Forms a complex with REC114; the interaction is required for MEI4 stability. Interacts (via N-terminal domain) with REC114 (via C-terminal domain). Interacts with IHO1.

The protein localises to the chromosome. In terms of biological role, required for DNA double-strand breaks (DSBs) formation in unsynapsed regions during meiotic recombination. Probably acts by forming a complex with IHO1 and REC114, which activates DSBs formation in unsynapsed regions, an essential step to ensure completion of synapsis. The polypeptide is Meiosis-specific protein MEI4 (Homo sapiens (Human)).